A 293-amino-acid chain; its full sequence is Histamine N-methyltransferase A (293 aa).

Residue E28 participates in substrate binding. G60, E89, Q94, S120, and I142 together coordinate S-adenosyl-L-methionine. N283 lines the substrate pocket.

The protein belongs to the class I-like SAM-binding methyltransferase superfamily. HNMT family. In terms of assembly, monomer.

It localises to the cytoplasm. The enzyme catalyses histamine + S-adenosyl-L-methionine = N(tau)-methylhistamine + S-adenosyl-L-homocysteine + H(+). In terms of biological role, inactivates histamine by N-methylation. Plays an important role in degrading histamine and in regulating the airway response to histamine. In Xenopus laevis (African clawed frog), this protein is Histamine N-methyltransferase A (hnmt-a).